The sequence spans 424 residues: CinA-like protein (424 aa).

The protein belongs to the CinA family.

This Syntrophobacter fumaroxidans (strain DSM 10017 / MPOB) protein is CinA-like protein.